The primary structure comprises 348 residues: Zinc transporter ZIP13 (348 aa).

Topologically, residues 1–45 are cytoplasmic; it reads MMIQTAVAQAKTAPAGPGPWSIKDLVDLQYLDELMSIDNLDVWFC. The helical transmembrane segment at 46 to 66 threads the bilayer; that stretch reads SLVGSIAIGLSGIFPLLVIPI. Residues 67-83 lie on the Lumenal side of the membrane; the sequence is EAGTALKTEAGCQKLKK. Residues 84–104 traverse the membrane as a helical segment; the sequence is LLSFAIGGLLGDVFLHLLPEA. At 105–118 the chain is on the cytoplasmic side; the sequence is WAYTSSPGGSHRHY. The chain crosses the membrane as a helical span at residues 119 to 139; sequence CTQGLWVIGGLMSFLTLEKMF. Residues 140–219 are Lumenal-facing; sequence PDEVGDPETK…CIDNFTHGLA (80 aa). Residues 144–192 are disordered; it reads GDPETKTSFQRTTSSSSDLSSQFSVSPQTNGICSNNNSDSKPKTDISPY. The span at 149 to 169 shows a compositional bias: low complexity; sequence KTSFQRTTSSSSDLSSQFSVS. A compositionally biased stretch (polar residues) spans 170–182; it reads PQTNGICSNNNSD. The helical transmembrane segment at 220 to 240 threads the bilayer; that stretch reads VAGSFLVSRKVGFLTTFAILL. The XEXPHE-motif motif lies at 241–246; sequence HEIPHE. Residues 241–262 lie on the Cytoplasmic side of the membrane; sequence HEIPHEVGDFAILLRAGFDRWK. A helical transmembrane segment spans residues 263–283; sequence AARMQLSTALGGVLGACFALC. At 284–294 the chain is on the lumenal side; it reads SQSQHGAENAT. A helical transmembrane segment spans residues 295–315; the sequence is TWILPFTSGGFLYIALVNVVP. The Cytoplasmic portion of the chain corresponds to 316–326; that stretch reads DLLEETNPRNS. A helical transmembrane segment spans residues 327–347; the sequence is LLQVLLLFSGIGVMALLSIAM. Position 348 (Asp348) is a topological domain, lumenal.

This sequence belongs to the ZIP transporter (TC 2.A.5) family. In terms of assembly, homodimer.

It localises to the golgi apparatus membrane. It is found in the cytoplasmic vesicle membrane. Its subcellular location is the endoplasmic reticulum membrane. It carries out the reaction Zn(2+)(in) = Zn(2+)(out). In terms of biological role, functions as a zinc transporter transporting Zn(2+) from the Golgi apparatus to the cytosol and thus influences the zinc level at least in areas of the cytosol. The sequence is that of Zinc transporter ZIP13 from Danio rerio (Zebrafish).